The sequence spans 124 residues: Large ribosomal subunit protein uL29 (124 aa).

This sequence belongs to the universal ribosomal protein uL29 family.

This chain is Large ribosomal subunit protein uL29 (RPL35), found in Tetrahymena thermophila (strain SB210).